Consider the following 106-residue polypeptide: uncharacterized protein (106 aa).

The first 31 residues, 1 to 31, serve as a signal peptide directing secretion; it reads MKKKTKIILSLLAALIVILIVLPVLSPVVFT.

This is an uncharacterized protein from Bacillus subtilis (strain 168).